The sequence spans 410 residues: Multifunctional CCA protein (410 aa).

Residues glycine 8 and arginine 11 each coordinate ATP. CTP-binding residues include glycine 8 and arginine 11. Mg(2+) contacts are provided by aspartate 21 and aspartate 23. ATP contacts are provided by arginine 91, arginine 138, and arginine 141. CTP is bound by residues arginine 91, arginine 138, and arginine 141. An HD domain is found at 229-347 (TGIHQEMVSD…AQLALVCEAD (119 aa)).

The protein belongs to the tRNA nucleotidyltransferase/poly(A) polymerase family. Bacterial CCA-adding enzyme type 1 subfamily. In terms of assembly, monomer. Can also form homodimers and oligomers. Mg(2+) serves as cofactor. Ni(2+) is required as a cofactor.

The catalysed reaction is a tRNA precursor + 2 CTP + ATP = a tRNA with a 3' CCA end + 3 diphosphate. The enzyme catalyses a tRNA with a 3' CCA end + 2 CTP + ATP = a tRNA with a 3' CCACCA end + 3 diphosphate. Its function is as follows. Catalyzes the addition and repair of the essential 3'-terminal CCA sequence in tRNAs without using a nucleic acid template. Adds these three nucleotides in the order of C, C, and A to the tRNA nucleotide-73, using CTP and ATP as substrates and producing inorganic pyrophosphate. tRNA 3'-terminal CCA addition is required both for tRNA processing and repair. Also involved in tRNA surveillance by mediating tandem CCA addition to generate a CCACCA at the 3' terminus of unstable tRNAs. While stable tRNAs receive only 3'-terminal CCA, unstable tRNAs are marked with CCACCA and rapidly degraded. The protein is Multifunctional CCA protein of Xanthomonas oryzae pv. oryzae (strain MAFF 311018).